A 1263-amino-acid polypeptide reads, in one-letter code: TBC1 domain family member 9B (1263 aa).

2 consecutive GRAM domains span residues 142-209 (LKMR…EKNA) and 288-356 (ECYR…EKAD). Residue Thr-397 is modified to Phosphothreonine. Residues 397-449 (TPSKQTGSSIGGTKASVSDPAPESLPTPQEASEPPASPSSPLSSPPSFSTQEI) are disordered. A phosphoserine mark is found at Ser-412, Ser-433, Ser-436, and Ser-464. The segment covering 422–447 (PTPQEASEPPASPSSPLSSPPSFSTQ) has biased composition (low complexity). The Rab-GAP TBC domain occupies 509 to 696 (GIPESLRGEL…VIVDCFFYEG (188 aa)). The chain crosses the membrane as a helical span at residues 669–689 (LSWFLTLFLSVMPFESAVVIV). One can recognise an EF-hand domain in the interval 880–915 (HTPVLAGRMFRLLDQNKDSLINFKEFVTGMSGMYHG). Disordered stretches follow at residues 977 to 1002 (EQQE…PDYR), 1075 to 1126 (TTKK…SGDM), and 1139 to 1159 (VEGG…DDET). The segment covering 987–1002 (TPERREEKGTSPPDYR) has biased composition (basic and acidic residues). A Phosphoserine modification is found at Ser-1254.

It is found in the membrane. Its function is as follows. May act as a GTPase-activating protein for Rab family protein(s). The chain is TBC1 domain family member 9B (Tbc1d9b) from Mus musculus (Mouse).